Here is a 174-residue protein sequence, read N- to C-terminus: UPF0664 stress-induced protein C29B12.11c (174 aa).

The segment at 147–174 (HLDPLPPYHRPSSSQDQPPHYEEAVNKS) is disordered. Positions 165 to 174 (PHYEEAVNKS) are enriched in basic and acidic residues.

Belongs to the UPF0664 family.

It is found in the cytoplasm. The protein resides in the nucleus. This is UPF0664 stress-induced protein C29B12.11c from Schizosaccharomyces pombe (strain 972 / ATCC 24843) (Fission yeast).